We begin with the raw amino-acid sequence, 124 residues long: Small ribosomal subunit protein uS12 (124 aa).

3-methylthioaspartic acid is present on Asp-89. Positions 104–124 (SAGVQNRNRGRSKYGTKRPKK) are disordered. Basic residues predominate over residues 111–124 (NRGRSKYGTKRPKK).

The protein belongs to the universal ribosomal protein uS12 family. Part of the 30S ribosomal subunit. Contacts proteins S8 and S17. May interact with IF1 in the 30S initiation complex.

In terms of biological role, with S4 and S5 plays an important role in translational accuracy. Its function is as follows. Interacts with and stabilizes bases of the 16S rRNA that are involved in tRNA selection in the A site and with the mRNA backbone. Located at the interface of the 30S and 50S subunits, it traverses the body of the 30S subunit contacting proteins on the other side and probably holding the rRNA structure together. The combined cluster of proteins S8, S12 and S17 appears to hold together the shoulder and platform of the 30S subunit. This Desulforamulus reducens (strain ATCC BAA-1160 / DSM 100696 / MI-1) (Desulfotomaculum reducens) protein is Small ribosomal subunit protein uS12.